The chain runs to 408 residues: Mitochondrial outer membrane protein SLC25A46 (408 aa).

2 disordered regions span residues 1 to 23 and 52 to 80; these read MHPR…EEPC and HWGE…LGAG. Residues 66-76 are compositionally biased toward low complexity; that stretch reads LGAAGLNEEPG. Residues 86 to 177 form a Solcar 1 repeat; it reads QLNRFAGFGI…GIISEFTPLP (92 aa). Transmembrane regions (helical) follow at residues 93–113, 157–177, 189–209, 248–268, 304–324, and 373–393; these read FGIG…CIVL, FIVQ…TPLP, IGGH…FYSA, LLPL…HYVI, FPEL…LYPL, and LGFY…VAVL. One copy of the Solcar 2 repeat lies at 301 to 403; the sequence is DAYFPELIAS…QLTKIIYSTL (103 aa).

It belongs to the mitochondrial carrier (TC 2.A.29) family.

Its subcellular location is the mitochondrion outer membrane. Transmembrane protein of the mitochondrial outer membrane that controls mitochondrial organization. May regulate the assembly of the MICOS (mitochondrial contact site and cristae organizing system) complex which is essential to the biogenesis and dynamics of mitochondrial cristae, the inwards folds of the inner mitochondrial membrane. Through its interaction with the EMC (endoplasmic reticulum membrane protein complex), could regulate mitochondrial lipid homeostasis and thereby mitochondrial fission. The sequence is that of Mitochondrial outer membrane protein SLC25A46 from Gallus gallus (Chicken).